A 493-amino-acid polypeptide reads, in one-letter code: UDP-N-acetylmuramate--L-alanine ligase (493 aa).

126–132 is an ATP binding site; it reads GTHGKTT.

The protein belongs to the MurCDEF family.

It localises to the cytoplasm. It catalyses the reaction UDP-N-acetyl-alpha-D-muramate + L-alanine + ATP = UDP-N-acetyl-alpha-D-muramoyl-L-alanine + ADP + phosphate + H(+). It participates in cell wall biogenesis; peptidoglycan biosynthesis. Functionally, cell wall formation. In Hamiltonella defensa subsp. Acyrthosiphon pisum (strain 5AT), this protein is UDP-N-acetylmuramate--L-alanine ligase.